The following is a 154-amino-acid chain: NADPH-dependent 7-cyano-7-deazaguanine reductase (154 aa).

Residues 1-21 show a composition bias toward polar residues; that stretch reads MPNTDVSSLSMLGHQTETASS. Residues 1–26 are disordered; the sequence is MPNTDVSSLSMLGHQTETASSPEEAV. The active-site Thioimide intermediate is the C52. Residue D59 is the Proton donor of the active site. Substrate contacts are provided by residues 74 to 76 and 93 to 94; these read VES and HE.

This sequence belongs to the GTP cyclohydrolase I family. QueF type 1 subfamily.

Its subcellular location is the cytoplasm. The catalysed reaction is 7-aminomethyl-7-carbaguanine + 2 NADP(+) = 7-cyano-7-deazaguanine + 2 NADPH + 3 H(+). It functions in the pathway tRNA modification; tRNA-queuosine biosynthesis. Functionally, catalyzes the NADPH-dependent reduction of 7-cyano-7-deazaguanine (preQ0) to 7-aminomethyl-7-deazaguanine (preQ1). The sequence is that of NADPH-dependent 7-cyano-7-deazaguanine reductase from Rhizobium etli (strain ATCC 51251 / DSM 11541 / JCM 21823 / NBRC 15573 / CFN 42).